Consider the following 254-residue polypeptide: MLAVLLFAALVATAYSQSNYGPGKPDVKIIPHPKTVVHEDARHVHKQVHLVKQVPVHRTRVQTIINEVPRIVTKPKKIKRTRIFRQYYPVDVPVIRRVTYLQPVHLERKVPVARMVVKDVPHHVVRTKKVDVPIDVPIKKIVEKKVVRYVENKIFRPRPVVQEKVRVVHVPKPFPVDRVIVQKNPRPRIIVEKKAVPVIRHIHTHKKQAVAVPRVKTVAEVVPNVVHQKVTYPVGKGGGSVQIPGGPLPVPEKF.

A signal peptide spans 1–16; it reads MLAVLLFAALVATAYS.

As to expression, prismatic layer of shell (at protein level). Expressed primarily in the mantle with highest level in the outer epithelium of the mantle edge and lower level in the mantle pallium.

The protein localises to the secreted. This is Mantle protein from Margaritifera margaritifera (Freshwater pearl mussel).